A 155-amino-acid chain; its full sequence is Xanthine-guanine phosphoribosyltransferase 2 (155 aa).

5-phospho-alpha-D-ribose 1-diphosphate contacts are provided by residues 37 to 38 (RG) and 91 to 99 (DDLVDTGNT). A Mg(2+)-binding site is contributed by D92. The guanine site is built by D95 and I138. Xanthine contacts are provided by D95 and I138. GMP is bound by residues 95–99 (DTGNT) and 137–138 (WI).

Belongs to the purine/pyrimidine phosphoribosyltransferase family. XGPT subfamily. Homotetramer. Mg(2+) serves as cofactor.

It localises to the cell inner membrane. The catalysed reaction is GMP + diphosphate = guanine + 5-phospho-alpha-D-ribose 1-diphosphate. It catalyses the reaction XMP + diphosphate = xanthine + 5-phospho-alpha-D-ribose 1-diphosphate. The enzyme catalyses IMP + diphosphate = hypoxanthine + 5-phospho-alpha-D-ribose 1-diphosphate. It functions in the pathway purine metabolism; GMP biosynthesis via salvage pathway; GMP from guanine: step 1/1. It participates in purine metabolism; XMP biosynthesis via salvage pathway; XMP from xanthine: step 1/1. Its function is as follows. Purine salvage pathway enzyme that catalyzes the transfer of the ribosyl-5-phosphate group from 5-phospho-alpha-D-ribose 1-diphosphate (PRPP) to the N9 position of the 6-oxopurines guanine and xanthine to form the corresponding ribonucleotides GMP (guanosine 5'-monophosphate) and XMP (xanthosine 5'-monophosphate), with the release of PPi. To a lesser extent, also acts on hypoxanthine. The protein is Xanthine-guanine phosphoribosyltransferase 2 of Haemophilus influenzae (strain 86-028NP).